Reading from the N-terminus, the 324-residue chain is Probable carboxylesterase 9 (324 aa).

An Involved in the stabilization of the negatively charged intermediate by the formation of the oxyanion hole motif is present at residues 86 to 88; that stretch reads HGS. Catalysis depends on residues serine 171, aspartate 272, and histidine 302.

This sequence belongs to the 'GDXG' lipolytic enzyme family. As to expression, expressed in flowers.

The enzyme catalyses a carboxylic ester + H2O = an alcohol + a carboxylate + H(+). Carboxylesterase acting on esters with varying acyl chain length. In Arabidopsis thaliana (Mouse-ear cress), this protein is Probable carboxylesterase 9 (CXE9).